A 211-amino-acid polypeptide reads, in one-letter code: ATP phosphoribosyltransferase (211 aa).

This sequence belongs to the ATP phosphoribosyltransferase family. Short subfamily. Heteromultimer composed of HisG and HisZ subunits.

The protein localises to the cytoplasm. It catalyses the reaction 1-(5-phospho-beta-D-ribosyl)-ATP + diphosphate = 5-phospho-alpha-D-ribose 1-diphosphate + ATP. It functions in the pathway amino-acid biosynthesis; L-histidine biosynthesis; L-histidine from 5-phospho-alpha-D-ribose 1-diphosphate: step 1/9. In terms of biological role, catalyzes the condensation of ATP and 5-phosphoribose 1-diphosphate to form N'-(5'-phosphoribosyl)-ATP (PR-ATP). Has a crucial role in the pathway because the rate of histidine biosynthesis seems to be controlled primarily by regulation of HisG enzymatic activity. This chain is ATP phosphoribosyltransferase, found in Bacillus cereus (strain 03BB102).